Here is a 1296-residue protein sequence, read N- to C-terminus: DNA-directed RNA polymerase subunit beta' (1296 aa).

Residues cysteine 60, cysteine 62, cysteine 75, and cysteine 78 each coordinate Zn(2+). Mg(2+)-binding residues include aspartate 535, aspartate 537, and aspartate 539. Zn(2+) is bound by residues cysteine 877, cysteine 954, cysteine 961, and cysteine 964.

The protein belongs to the RNA polymerase beta' chain family. As to quaternary structure, the RNAP catalytic core consists of 2 alpha, 1 beta, 1 beta' and 1 omega subunit. When a sigma factor is associated with the core the holoenzyme is formed, which can initiate transcription. The cofactor is Mg(2+). Zn(2+) is required as a cofactor.

The enzyme catalyses RNA(n) + a ribonucleoside 5'-triphosphate = RNA(n+1) + diphosphate. In terms of biological role, DNA-dependent RNA polymerase catalyzes the transcription of DNA into RNA using the four ribonucleoside triphosphates as substrates. This chain is DNA-directed RNA polymerase subunit beta', found in Beutenbergia cavernae (strain ATCC BAA-8 / DSM 12333 / CCUG 43141 / JCM 11478 / NBRC 16432 / NCIMB 13614 / HKI 0122).